We begin with the raw amino-acid sequence, 313 residues long: Ribosomal RNA small subunit methyltransferase H (313 aa).

S-adenosyl-L-methionine-binding positions include 36-38, aspartate 56, phenylalanine 80, aspartate 102, and glutamine 109; that span reads GGH.

It belongs to the methyltransferase superfamily. RsmH family.

The protein localises to the cytoplasm. The enzyme catalyses cytidine(1402) in 16S rRNA + S-adenosyl-L-methionine = N(4)-methylcytidine(1402) in 16S rRNA + S-adenosyl-L-homocysteine + H(+). Specifically methylates the N4 position of cytidine in position 1402 (C1402) of 16S rRNA. The polypeptide is Ribosomal RNA small subunit methyltransferase H (Actinobacillus pleuropneumoniae serotype 7 (strain AP76)).